A 506-amino-acid chain; its full sequence is 2,3-bisphosphoglycerate-independent phosphoglycerate mutase (506 aa).

Residues aspartate 9 and serine 59 each contribute to the Mn(2+) site. Serine 59 serves as the catalytic Phosphoserine intermediate. Residues histidine 120, 149–150 (RD), arginine 181, arginine 187, 254–257 (RADR), and lysine 327 contribute to the substrate site. Mn(2+) is bound by residues aspartate 394, histidine 398, aspartate 435, histidine 436, and histidine 452.

This sequence belongs to the BPG-independent phosphoglycerate mutase family. Requires Mn(2+) as cofactor.

The catalysed reaction is (2R)-2-phosphoglycerate = (2R)-3-phosphoglycerate. It participates in carbohydrate degradation; glycolysis; pyruvate from D-glyceraldehyde 3-phosphate: step 3/5. Its function is as follows. Catalyzes the interconversion of 2-phosphoglycerate and 3-phosphoglycerate. The protein is 2,3-bisphosphoglycerate-independent phosphoglycerate mutase of Natronomonas pharaonis (strain ATCC 35678 / DSM 2160 / CIP 103997 / JCM 8858 / NBRC 14720 / NCIMB 2260 / Gabara) (Halobacterium pharaonis).